The primary structure comprises 131 residues: Sulfurtransferase TusD (131 aa).

Cys81 acts as the Cysteine persulfide intermediate in catalysis.

The protein belongs to the DsrE/TusD family. As to quaternary structure, heterohexamer, formed by a dimer of trimers. The hexameric TusBCD complex contains 2 copies each of TusB, TusC and TusD. The TusBCD complex interacts with TusE.

It is found in the cytoplasm. Functionally, part of a sulfur-relay system required for 2-thiolation of 5-methylaminomethyl-2-thiouridine (mnm(5)s(2)U) at tRNA wobble positions. Accepts sulfur from TusA and transfers it in turn to TusE. The sequence is that of Sulfurtransferase TusD from Yersinia pseudotuberculosis serotype O:1b (strain IP 31758).